The primary structure comprises 398 residues: Carbamoyl phosphate synthase small chain (398 aa).

CPSase stretches follow at residues M1 to A205 and M1 to N207. L-glutamine-binding residues include S60, G257, and G259. Positions H209 to T397 constitute a Glutamine amidotransferase type-1 domain. Catalysis depends on C286, which acts as the Nucleophile. Residues L287, Q290, N328, G330, and F331 each coordinate L-glutamine. Active-site residues include H370 and E372.

It belongs to the CarA family. In terms of assembly, composed of two chains; the small (or glutamine) chain promotes the hydrolysis of glutamine to ammonia, which is used by the large (or ammonia) chain to synthesize carbamoyl phosphate. Tetramer of heterodimers (alpha,beta)4.

It catalyses the reaction hydrogencarbonate + L-glutamine + 2 ATP + H2O = carbamoyl phosphate + L-glutamate + 2 ADP + phosphate + 2 H(+). The catalysed reaction is L-glutamine + H2O = L-glutamate + NH4(+). It participates in amino-acid biosynthesis; L-arginine biosynthesis; carbamoyl phosphate from bicarbonate: step 1/1. It functions in the pathway pyrimidine metabolism; UMP biosynthesis via de novo pathway; (S)-dihydroorotate from bicarbonate: step 1/3. In terms of biological role, small subunit of the glutamine-dependent carbamoyl phosphate synthetase (CPSase). CPSase catalyzes the formation of carbamoyl phosphate from the ammonia moiety of glutamine, carbonate, and phosphate donated by ATP, constituting the first step of 2 biosynthetic pathways, one leading to arginine and/or urea and the other to pyrimidine nucleotides. The small subunit (glutamine amidotransferase) binds and cleaves glutamine to supply the large subunit with the substrate ammonia. This is Carbamoyl phosphate synthase small chain from Bartonella quintana (strain Toulouse) (Rochalimaea quintana).